A 255-amino-acid polypeptide reads, in one-letter code: Bouquet formation protein 3 (255 aa).

A run of 8 helical transmembrane segments spans residues 13–33 (IKVS…NYHL), 48–68 (IPYW…LLLQ), 72–94 (LGYG…YYLT), 99–116 (IAWA…ARCF), 132–152 (YSVS…LNYI), 172–192 (SLVA…GYVI), 205–225 (SLFL…SILF), and 235–255 (VVGA…ALSL).

It is found in the endoplasmic reticulum membrane. Its subcellular location is the nucleus inner membrane. In terms of biological role, connects telomeres to the nuclear envelop (NE) during both vegetative growth and meiosis. This connection ensures clustering of telomeres to the spindle pole body (SPB) when cells enter meiotic prophase. The protein is Bouquet formation protein 3 (bqt3) of Schizosaccharomyces pombe (strain 972 / ATCC 24843) (Fission yeast).